The sequence spans 566 residues: MOB kinase activator-like 2 (566 aa).

2 disordered regions span residues 28-57 and 74-118; these read ADAT…SSLS and GRAV…GAQA. Over residues 35–57 the composition is skewed to low complexity; the sequence is SSTAPQTPTASTPRPSSSHSSLS. The segment covering 85 to 115 has biased composition (gly residues); the sequence is QNGGKGNASGAGGGAGGGGAGGASGGTGGTG. Zn(2+) is bound by residues Cys-209, Cys-214, His-289, and His-294. Disordered stretches follow at residues 346–407 and 498–541; these read GGCQ…SASA and FSNN…QCNA. Residues 367–388 show a composition bias toward low complexity; it reads LQHQSLQQQQQHHNSSSNSTSS. Residues 394–407 are compositionally biased toward polar residues; the sequence is VNSQSNNGSTSASA. The segment covering 498-507 has biased composition (low complexity); it reads FSNNNNNNHN. A compositionally biased stretch (basic residues) spans 508 to 526; the sequence is LNHHHHHHHHHGHHGHHHA.

This sequence belongs to the MOB1/phocein family. In terms of assembly, interacts with and activates trc, also interacts with wts.

The protein localises to the cytoplasm. It localises to the nucleus. Its function is as follows. Required for the normal morphogenesis of a variety of polarized outgrowths including epidermal hairs, bristles, arista laterals, and dendrites. This Drosophila melanogaster (Fruit fly) protein is MOB kinase activator-like 2 (Mob2).